The chain runs to 431 residues: Glucose-6-phosphate isomerase (431 aa).

Residue Glu284 is the Proton donor of the active site. Active-site residues include His305 and Lys420.

It belongs to the GPI family.

The protein localises to the cytoplasm. It catalyses the reaction alpha-D-glucose 6-phosphate = beta-D-fructose 6-phosphate. Its pathway is carbohydrate biosynthesis; gluconeogenesis. It functions in the pathway carbohydrate degradation; glycolysis; D-glyceraldehyde 3-phosphate and glycerone phosphate from D-glucose: step 2/4. Functionally, catalyzes the reversible isomerization of glucose-6-phosphate to fructose-6-phosphate. In Mycoplasma genitalium (strain ATCC 33530 / DSM 19775 / NCTC 10195 / G37) (Mycoplasmoides genitalium), this protein is Glucose-6-phosphate isomerase.